We begin with the raw amino-acid sequence, 528 residues long: Probable feruloyl esterase B-1 (528 aa).

Residues 1-19 (MMWWFLLIGLASAAATASS) form the signal peptide. Cystine bridges form between C29–C78, C64–C117, C190–C445, C259–C276, C285–C295, and C505–C527. 2 N-linked (GlcNAc...) asparagine glycosylation sites follow: N83 and N101. S191 (acyl-ester intermediate) is an active-site residue. 5 residues coordinate Ca(2+): D260, D263, A265, D267, and I269. 3 N-linked (GlcNAc...) asparagine glycosylation sites follow: N286, N354, and N385. Residues D404 and H444 each act as charge relay system in the active site.

This sequence belongs to the tannase family.

Its subcellular location is the secreted. The catalysed reaction is feruloyl-polysaccharide + H2O = ferulate + polysaccharide.. Functionally, involved in degradation of plant cell walls. Hydrolyzes the feruloyl-arabinose ester bond in arabinoxylans as well as the feruloyl-galactose and feruloyl-arabinose ester bonds in pectin. The sequence is that of Probable feruloyl esterase B-1 (faeB-1) from Aspergillus fumigatus (strain CBS 144.89 / FGSC A1163 / CEA10) (Neosartorya fumigata).